A 221-amino-acid polypeptide reads, in one-letter code: UPF0758 protein YicR (221 aa).

Residues alanine 99–isoleucine 221 form the MPN domain. Zn(2+) is bound by residues histidine 170, histidine 172, and aspartate 183. Positions histidine 170–aspartate 183 match the JAMM motif motif.

This sequence belongs to the UPF0758 family. YicR subfamily.

The protein is UPF0758 protein YicR of Salmonella arizonae (strain ATCC BAA-731 / CDC346-86 / RSK2980).